The primary structure comprises 376 residues: Alcohol dehydrogenase class-3 (376 aa).

Cys47, His69, Cys99, Cys102, Cys105, Cys113, and Cys176 together coordinate Zn(2+).

It belongs to the zinc-containing alcohol dehydrogenase family. Class-III subfamily. In terms of assembly, homodimer. Zn(2+) is required as a cofactor. Expressed in the skeletal muscle, heart, gill filaments and liver, with highest levels in the kidney.

It localises to the cytoplasm. It catalyses the reaction a primary alcohol + NAD(+) = an aldehyde + NADH + H(+). It carries out the reaction a secondary alcohol + NAD(+) = a ketone + NADH + H(+). The enzyme catalyses S-(hydroxymethyl)glutathione + NADP(+) = S-formylglutathione + NADPH + H(+). The catalysed reaction is S-(hydroxymethyl)glutathione + NAD(+) = S-formylglutathione + NADH + H(+). It catalyses the reaction S-nitrosoglutathione + NADH + H(+) = S-(hydroxysulfenamide)glutathione + NAD(+). Its function is as follows. Class-III ADH is remarkably ineffective in oxidizing ethanol, but it readily catalyzes the oxidation of long-chain primary alcohols and the oxidation of S-(hydroxymethyl) glutathione. Also acts as a S-nitroso-glutathione reductase by catalyzing the NADH-dependent reduction of S-nitrosoglutathione, thereby regulating protein S-nitrosylation. In Sparus aurata (Gilthead sea bream), this protein is Alcohol dehydrogenase class-3.